The following is a 250-amino-acid chain: 1-(5-phosphoribosyl)-5-[(5-phosphoribosylamino)methylideneamino] imidazole-4-carboxamide isomerase (250 aa).

Asp-8 (proton acceptor) is an active-site residue. Asp-131 (proton donor) is an active-site residue.

It belongs to the HisA/HisF family.

The protein resides in the cytoplasm. It carries out the reaction 1-(5-phospho-beta-D-ribosyl)-5-[(5-phospho-beta-D-ribosylamino)methylideneamino]imidazole-4-carboxamide = 5-[(5-phospho-1-deoxy-D-ribulos-1-ylimino)methylamino]-1-(5-phospho-beta-D-ribosyl)imidazole-4-carboxamide. The protein operates within amino-acid biosynthesis; L-histidine biosynthesis; L-histidine from 5-phospho-alpha-D-ribose 1-diphosphate: step 4/9. In Paraburkholderia phymatum (strain DSM 17167 / CIP 108236 / LMG 21445 / STM815) (Burkholderia phymatum), this protein is 1-(5-phosphoribosyl)-5-[(5-phosphoribosylamino)methylideneamino] imidazole-4-carboxamide isomerase.